The primary structure comprises 4293 residues: Polycystin-1 (4293 aa).

A signal peptide spans 1–23 (MPLGAPALLALALGLGLWLGALA). The region spanning 24–67 (GDPGRGCGPCPLPCFCGPAPDAACRVNCSGRWLQTLGPSLRIPA) is the LRRNT domain. At 24–3066 (GDPGRGCGPC…IFPEPSASIN (3043 aa)) the chain is on the extracellular side. Asparagine 50 and asparagine 89 each carry an N-linked (GlcNAc...) asparagine glycan. LRR repeat units follow at residues 68–91 (DATA…VNLS) and 92–113 (ALVE…VFAN). Residues asparagine 116 and asparagine 121 are each glycosylated (N-linked (GlcNAc...) asparagine). One can recognise an LRRCT domain in the interval 125–178 (NPFECNCGLAWLPRWAKEHQVHVVQSEATTCRGPIPLAGQPLLSIPLLDNACGE). Residues 177–271 (GEEYVACLPD…PTLLQHTFPA (95 aa)) enclose the WSC domain. Asparagine 187 and asparagine 239 each carry an N-linked (GlcNAc...) asparagine glycan. In terms of domain architecture, PKD 1 spans 272–359 (SPGATLVGPH…VQVEATPTVL (88 aa)). Residue asparagine 370 is glycosylated (N-linked (GlcNAc...) asparagine). Residues 415 to 530 (GNGHCYRLVA…CSAPHSYVCE (116 aa)) enclose the C-type lectin domain. Cystine bridges form between cysteine 436-cysteine 529 and cysteine 507-cysteine 521. The disordered stretch occupies residues 613 to 632 (GGAAAVPEGSSEPDNRTEPA). Asparagine 627 carries N-linked (GlcNAc...) asparagine glycosylation. The 34-residue stretch at 633-666 (PKCVPEELWCPGANVCIPFDASCNSHVCINGSVS) folds into the LDL-receptor class A; atypical domain. 2 cysteine pairs are disulfide-bonded: cysteine 635-cysteine 648 and cysteine 642-cysteine 660. Residues asparagine 662, asparagine 740, asparagine 804, asparagine 835, asparagine 848, asparagine 859, asparagine 884, asparagine 915, asparagine 998, asparagine 1004, asparagine 1028, asparagine 1084, asparagine 1096, asparagine 1107, asparagine 1172, asparagine 1188, asparagine 1234, asparagine 1263, asparagine 1330, asparagine 1342, asparagine 1376, asparagine 1444, asparagine 1449, asparagine 1468, asparagine 1535, asparagine 1548, asparagine 1557, asparagine 1643, asparagine 1657, asparagine 1706, asparagine 1730, asparagine 1788, asparagine 1831, asparagine 1863, and asparagine 1876 are each glycosylated (N-linked (GlcNAc...) asparagine). PKD domains lie at 849 to 922 (ATAT…RVTA), 929 to 1014 (LRAV…NKMH), 1017 to 1123 (WVSA…LPNV), 1121 to 1209 (PNVA…LHGL), 1207 to 1292 (HGLT…EVLH), 1288 to 1377 (LEVL…IRNI), 1376 to 1463 (NITL…VLVT), 1462 to 1545 (VTGI…VRGL), 1544 to 1629 (GLTI…IEGL), 1630 to 1718 (QVAG…VESL), 1716 to 1802 (ESLI…VGGL), 1804 to 1886 (IRTS…IVNL), 1885 to 1970 (NLML…VVGL), 1972 to 2053 (VPNC…MVEV), and 2056 to 2144 (IIQY…ACRE). N-linked (GlcNAc...) asparagine glycans are attached at residues asparagine 1987, asparagine 2046, asparagine 2070, asparagine 2121, asparagine 2244, asparagine 2349, asparagine 2391, asparagine 2408, asparagine 2414, asparagine 2563, asparagine 2640, asparagine 2713, asparagine 2749, asparagine 2813, asparagine 2836, asparagine 2873, asparagine 2948, and asparagine 2986. In terms of domain architecture, REJ spans 2142 to 2828 (CREPEVEVAL…QLIFLVDSNP (687 aa)). A GAIN-B domain is found at 2857–3055 (PIEQLAAERA…SLFVPPSHVQ (199 aa)). Residues cysteine 3007 and cysteine 3035 are joined by a disulfide bond. Residues 3007-3055 (CQYFSEEMMMWRTEGIVPLEETSPSQAVCLTRHLTAFGASLFVPPSHVQ) are GPS. Residues 3067–3087 (YIVLLTCVICLVTYVVMAMIL) form a helical membrane-spanning segment. Over 3088–3269 (RKLDQLDVSR…DRPPRSRFTR (182 aa)) the chain is Cytoplasmic. Residues 3110 to 3225 (FKYEILVKTG…EANGGLVEKE (116 aa)) form the PLAT domain. The helical transmembrane segment at 3270-3290 (VQRVTCCVLLLCLFLAANAVW) threads the bilayer. Residues 3291 to 3315 (YGVVRDTTYSMGPVSSLISPGVDTV) are Extracellular-facing. The helical transmembrane segment at 3316 to 3336 (AIGLVSSVVVYPVYLAVLFLF) threads the bilayer. Residues 3337–3549 (RMSRSKVSGD…LPAWCAPLAH (213 aa)) lie on the Cytoplasmic side of the membrane. Residues 3550 to 3570 (GLSLLLVAVAVAVSGWIGASF) traverse the membrane as a helical segment. At 3571–3572 (PP) the chain is on the extracellular side. The helical transmembrane segment at 3573 to 3593 (SVSVMWLLSSSSSFLASFLGW) threads the bilayer. Over 3594 to 3655 (EPLKVLLEAL…LAKEEARKVK (62 aa)) the chain is Cytoplasmic. The helical transmembrane segment at 3656–3676 (RLHDMLKRLLVYMLFLLVTLL) threads the bilayer. Residues 3677–3891 (ANYGDASCHG…RLSTGLSLPL (215 aa)) lie on the Extracellular side of the membrane. N-linked (GlcNAc...) asparagine glycosylation is found at asparagine 3728 and asparagine 3780. The chain crosses the membrane as a helical span at residues 3892–3912 (LTSVCLLLFALYFSMAEVQTW). Topologically, residues 3913-3925 (RKDGCACTARPDT) are cytoplasmic. Residues 3926–3946 (WARCLLVILTAATGLVRLAQL) traverse the membrane as a helical segment. Over 3947-3974 (GIADRQWTHFVQDHPRHFTSFDQVAQLG) the chain is Extracellular. Residues 3975 to 3995 (SVARGLAASLLFLLLVKAAQQ) traverse the membrane as a helical segment. Residues 3996–4017 (LRFVRQWSVFGKTLCRALPELM) lie on the Cytoplasmic side of the membrane. A helical membrane pass occupies residues 4018-4038 (GATLGLVLLGVAYAQMAILLI). At 4039 to 4080 (SSGADTLYNMARAFLVLCPGARVPTLCPSESWYLSPLLCVGL) the chain is on the extracellular side. A helical membrane pass occupies residues 4081-4100 (WALRVWGALRLGAILLRWRY). Residues 4101–4293 (HALRGELYRP…PNNKVHPSST (193 aa)) are Cytoplasmic-facing. 2 disordered regions span residues 4150–4197 (PLPS…STLK) and 4235–4293 (SLQG…PSST). A compositionally biased stretch (low complexity) spans 4153 to 4172 (SRSSRGSKSSPVVLPPSSGS). The residue at position 4156 (serine 4156) is a Phosphoserine; by PRKX; in vitro. The segment covering 4173–4195 (EASHPSTSSSQPDGPSASLSRST) has biased composition (polar residues). Residues 4210–4241 (ESLLVQFDRLNQATEDVYQLEQQLQSLQGHGH) adopt a coiled-coil conformation. Residues 4238–4256 (GHGHNGPPSSPSPGCFPGS) are compositionally biased toward low complexity. Residues 4265-4276 (SRASQGLDQTVG) show a composition bias toward polar residues.

The protein belongs to the polycystin family. In terms of assembly, component of the heterotetrameric polycystin channel complex with PKD2; the tetramer contains one PKD1 chain and three PKD2 chains. Interacts with PKD2; the interaction is required for ciliary localization. Interacts with PKD2L1. Interacts with PRKX; involved in differentiation and controlled morphogenesis of the kidney. Interacts (via extracellular domain) with WNT3A, WNT4 and WNT9B. Interacts with WNT5A, DVL1 and DVL2. Interacts with NPHP1 (via SH3 domain). Interacts with BBS1, BBS4, BBS5 and TTC8. Interacts with RGS7. Interacts (via C-terminal domain) with RABEP1; the interaction connects PKD1:PKD2 to GGA1 and ARL3 that mediate the ciliary targeting. Interacts (via the PKD repeats in the N-terminal extracellular region) with EPCIP; the interaction is not dependent on N-glycosylation of either protein. N-glycosylated. In terms of processing, after synthesis, undergoes autoproteolytic cleavage between Leu-3040 and Thr-3041 in the GPS region of the GAIN-B domain. Cleavage at the GPS region occurs through a cis-autoproteolytic mechanism involving an ester-intermediate via N-O acyl rearrangement. This process takes place in the early secretory pathway, depends on initial N-glycosylation, and requires the REJ domain. PKD1 is ubiquitously and incompletely cleaved in wild-type mice, so that uncleaved and cleaved PKD1 molecules coexist. The differential patterns of cleavage during embryonic development, as well as in adult mice, suggest different functions of uncleaved and cleaved molecules.

It is found in the cell membrane. It localises to the cell projection. The protein localises to the cilium. The protein resides in the endoplasmic reticulum. Its subcellular location is the golgi apparatus. It is found in the vesicle. It localises to the secreted. The protein localises to the extracellular exosome. In terms of biological role, component of a heteromeric calcium-permeable ion channel formed by PKD1 and PKD2 that is activated by interaction between PKD1 and a Wnt family member, such as WNT3A and WNT9B. Both PKD1 and PKD2 are required for channel activity. Involved in renal tubulogenesis. Involved in fluid-flow mechanosensation by the primary cilium in renal epithelium. Acts as a regulator of cilium length, together with PKD2. The dynamic control of cilium length is essential in the regulation of mechanotransductive signaling. The cilium length response creates a negative feedback loop whereby fluid shear-mediated deflection of the primary cilium, which decreases intracellular cAMP, leads to cilium shortening and thus decreases flow-induced signaling. May be an ion-channel regulator. Involved in adhesive protein-protein and protein-carbohydrate interactions. Likely to be involved with polycystin-1-interacting protein 1 in the detection, sequestration and exocytosis of senescent mitochondria. The chain is Polycystin-1 from Mus musculus (Mouse).